We begin with the raw amino-acid sequence, 478 residues long: Glycogen synthase (478 aa).

Lys-15 is an ADP-alpha-D-glucose binding site.

Belongs to the glycosyltransferase 1 family. Bacterial/plant glycogen synthase subfamily.

The catalysed reaction is [(1-&gt;4)-alpha-D-glucosyl](n) + ADP-alpha-D-glucose = [(1-&gt;4)-alpha-D-glucosyl](n+1) + ADP + H(+). Its pathway is glycan biosynthesis; glycogen biosynthesis. Its function is as follows. Synthesizes alpha-1,4-glucan chains using ADP-glucose. The sequence is that of Glycogen synthase from Acholeplasma laidlawii (strain PG-8A).